Here is an 889-residue protein sequence, read N- to C-terminus: Disease resistance protein RPS5 (889 aa).

G2 carries the N-myristoyl glycine lipid modification. A lipid anchor (S-palmitoyl cysteine) is attached at C4. A coiled-coil region spans residues I29–E58. An NB-ARC domain is found at S140–G444. Position 183 to 190 (G183 to T190) interacts with ATP. 6 LRR repeats span residues T518–A539, A540–C561, H564–L586, S588–K610, K611–W633, and N634–Q656.

Belongs to the disease resistance NB-LRR family. As to quaternary structure, in uninfected plants, interacts with PBS1 through the coiled coil domain. Homodimer.

It localises to the cell membrane. Functionally, disease resistance (R) protein that specifically recognizes the avrPphB type III effector avirulence protein from Pseudomonas syringae. Also confers resistance against Hyaloperonospora parasitica (downy mildew). Resistance proteins guard the plant against pathogens that contain an appropriate avirulence protein via an indirect interaction with this avirulence protein. That triggers a defense system including the hypersensitive response, which restricts the pathogen growth. Requires PBS1 to trigger the defense reaction against avrPphB. In case of infection by Pseudomonas syringae, AvrPphB triggers RPS5-mediated defense mechanism via the cleavage of PBS1, suggesting that the cleavage of PBS1 could trigger an exchange of ADP for ATP, thereby activating RPS5. May function as a fine-tuned sensor of alterations in the structure of the effector target PBS1. This is Disease resistance protein RPS5 (RPS5) from Arabidopsis thaliana (Mouse-ear cress).